Consider the following 229-residue polypeptide: Small ribosomal subunit protein uS3 (229 aa).

Positions 39-107 (IRKFLKKELY…EVFINIKEEK (69 aa)) constitute a KH type-2 domain.

It belongs to the universal ribosomal protein uS3 family. Part of the 30S ribosomal subunit. Forms a tight complex with proteins S10 and S14.

Its function is as follows. Binds the lower part of the 30S subunit head. Binds mRNA in the 70S ribosome, positioning it for translation. The polypeptide is Small ribosomal subunit protein uS3 (Nitratiruptor sp. (strain SB155-2)).